The chain runs to 1841 residues: Cell division control protein 12 (1841 aa).

Polar residues-rich tracts occupy residues 1-25 and 46-63; these read MRNSSKGQDPNFSYDSILSTPTPSA and SIESVSTLIQPNKSQSVT. 3 disordered regions span residues 1-63, 78-134, and 152-181; these read MRNS…QSVT, NSHN…GPRL, and PPVHSRSFDPLPKPPVPSVPVSKTKRRTKH. Residues 232–620 form the GBD/FH3 domain; the sequence is TRPPSLDQLI…RILLNSKVSN (389 aa). Positions 674–715 form a coiled coil; the sequence is LGAEDLIAKLNKEVEDQKDVILSQKRTNETLKTEIDALQKSH. The region spanning 740–972 is the FH1 domain; the sequence is GSTNSKERII…VSPAVSNNIS (233 aa). The FH2 domain maps to 980 to 1391; sequence TGLTRRPTRR…QHRRLNLVNN (412 aa). A coiled-coil region spans residues 1260-1290; it reads TEAAKLNIEAIEQECSELIRGCQNLQIDCDS. Disordered regions lie at residues 1445–1661, 1696–1715, and 1735–1758; these read EAPN…ENNL, TTTTISTARAKPGNNDINTI, and KSNKFSGTNDLNFQQATKPDGSNK. Composition is skewed to polar residues over residues 1447-1456 and 1483-1497; these read PNTSTKSSPA and SESTDGLSDALNITP. The segment covering 1499 to 1516 has biased composition (basic and acidic residues); the sequence is KKGEVSSKAKKGYNYEKR. Residues 1539–1553 are compositionally biased toward polar residues; it reads GRSASYTFSDPSSLE. Position 1541 is a phosphoserine (Ser1541). Tyr1544 carries the post-translational modification Phosphotyrosine. The span at 1554–1567 shows a compositional bias: basic and acidic residues; sequence DSNRQKPFNGEKFR. Positions 1568–1577 are enriched in basic residues; that stretch reads RFSSKSRRGS. Positions 1594-1604 are enriched in polar residues; it reads INNNQTSPQNK. Positions 1605-1621 are enriched in basic and acidic residues; sequence PSKESLKSDTISNEKKV. A compositionally biased stretch (polar residues) spans 1630-1641; the sequence is NLLTPTISNGTR.

The protein belongs to the formin homology family. BNI1 subfamily. Interacts with profilin and actin at the FH1 and FH2 domains respectively.

The protein resides in the nucleus. Functionally, plays a role in the cell cycle. Involved in cytokinesis. Component of the cell division ring. In the absence of profilin, caps the barbed end of actin filaments, thus preventing subunit addition and dissociation. In the presence of profilin, nucleates actin filaments that grow rapidly from their barbed ends. In Schizosaccharomyces pombe (strain 972 / ATCC 24843) (Fission yeast), this protein is Cell division control protein 12 (cdc12).